Reading from the N-terminus, the 612-residue chain is Dihydroxy-acid dehydratase (612 aa).

Asp-81 lines the Mg(2+) pocket. Cys-122 is a binding site for [2Fe-2S] cluster. Mg(2+) is bound by residues Asp-123 and Lys-124. Lys-124 carries the N6-carboxylysine modification. Cys-193 is a binding site for [2Fe-2S] cluster. Glu-489 contacts Mg(2+). Ser-515 serves as the catalytic Proton acceptor.

It belongs to the IlvD/Edd family. As to quaternary structure, homodimer. [2Fe-2S] cluster is required as a cofactor. Requires Mg(2+) as cofactor.

The catalysed reaction is (2R)-2,3-dihydroxy-3-methylbutanoate = 3-methyl-2-oxobutanoate + H2O. It catalyses the reaction (2R,3R)-2,3-dihydroxy-3-methylpentanoate = (S)-3-methyl-2-oxopentanoate + H2O. It functions in the pathway amino-acid biosynthesis; L-isoleucine biosynthesis; L-isoleucine from 2-oxobutanoate: step 3/4. Its pathway is amino-acid biosynthesis; L-valine biosynthesis; L-valine from pyruvate: step 3/4. In terms of biological role, functions in the biosynthesis of branched-chain amino acids. Catalyzes the dehydration of (2R,3R)-2,3-dihydroxy-3-methylpentanoate (2,3-dihydroxy-3-methylvalerate) into 2-oxo-3-methylpentanoate (2-oxo-3-methylvalerate) and of (2R)-2,3-dihydroxy-3-methylbutanoate (2,3-dihydroxyisovalerate) into 2-oxo-3-methylbutanoate (2-oxoisovalerate), the penultimate precursor to L-isoleucine and L-valine, respectively. The sequence is that of Dihydroxy-acid dehydratase from Azotobacter vinelandii (strain DJ / ATCC BAA-1303).